A 458-amino-acid polypeptide reads, in one-letter code: Protein U54 (458 aa).

Residues Asn76, Asn102, Asn281, Asn321, Asn346, Asn434, and Asn451 are each glycosylated (N-linked (GlcNAc...) asparagine; by host).

Belongs to the herpesviridae UL82 family.

This chain is Protein U54 (U54), found in Homo sapiens (Human).